The sequence spans 556 residues: 2-succinyl-5-enolpyruvyl-6-hydroxy-3-cyclohexene-1-carboxylate synthase (556 aa).

Belongs to the TPP enzyme family. MenD subfamily. In terms of assembly, homodimer. Mg(2+) is required as a cofactor. The cofactor is Mn(2+). Requires thiamine diphosphate as cofactor.

It carries out the reaction isochorismate + 2-oxoglutarate + H(+) = 5-enolpyruvoyl-6-hydroxy-2-succinyl-cyclohex-3-ene-1-carboxylate + CO2. It functions in the pathway quinol/quinone metabolism; 1,4-dihydroxy-2-naphthoate biosynthesis; 1,4-dihydroxy-2-naphthoate from chorismate: step 2/7. It participates in quinol/quinone metabolism; menaquinone biosynthesis. Functionally, catalyzes the thiamine diphosphate-dependent decarboxylation of 2-oxoglutarate and the subsequent addition of the resulting succinic semialdehyde-thiamine pyrophosphate anion to isochorismate to yield 2-succinyl-5-enolpyruvyl-6-hydroxy-3-cyclohexene-1-carboxylate (SEPHCHC). This Salmonella typhi protein is 2-succinyl-5-enolpyruvyl-6-hydroxy-3-cyclohexene-1-carboxylate synthase.